The following is a 151-amino-acid chain: Chaperonin GroEL (151 aa).

Residue 41-45 (DGTTT) coordinates ATP.

The protein belongs to the chaperonin (HSP60) family. Forms a cylinder of 14 subunits composed of two heptameric rings stacked back-to-back. Interacts with the co-chaperonin GroES.

It localises to the cytoplasm. The catalysed reaction is ATP + H2O + a folded polypeptide = ADP + phosphate + an unfolded polypeptide.. Together with its co-chaperonin GroES, plays an essential role in assisting protein folding. The GroEL-GroES system forms a nano-cage that allows encapsulation of the non-native substrate proteins and provides a physical environment optimized to promote and accelerate protein folding. This Mycobacteroides chelonae (Mycobacterium chelonae) protein is Chaperonin GroEL.